Here is a 208-residue protein sequence, read N- to C-terminus: MLQISKLISQGAGLAPVLVKRASTLEIDWDVRQKSRFDALDSLGRQLGVFLPRGTLVRGGDVLIAEDGSMVRVIAAPQPVLRITACASHGSAFDLTRAAYHLGNRHVPIELKPDHLKIEPDHVLADMLRAMHLTVQEVSEAFEPEGGAYSAGGHGHTHAPAATPVPAAVPPAAHVHGPDCNHGHDHAHAPQAIKPVAIQIHPRKPHSH.

The disordered stretch occupies residues 145-165; the sequence is EGGAYSAGGHGHTHAPAATPV.

Belongs to the UreE family.

The protein localises to the cytoplasm. In terms of biological role, involved in urease metallocenter assembly. Binds nickel. Probably functions as a nickel donor during metallocenter assembly. This is Urease accessory protein UreE from Polaromonas naphthalenivorans (strain CJ2).